Consider the following 380-residue polypeptide: Cytochrome b (380 aa).

The next 4 membrane-spanning stretches (helical) occupy residues 34 to 54 (FGSL…LLAM), 78 to 99 (WLIR…YFHI), 114 to 134 (WNTG…GYVL), and 179 to 199 (FFAL…IHLT). The heme b site is built by His-84 and His-98. The heme b site is built by His-183 and His-197. His-202 provides a ligand contact to a ubiquinone. 4 helical membrane passes run 227 to 247 (LKDI…ALFS), 289 to 309 (LGGV…PFLH), 321 to 341 (ISQL…WVGS), and 348 to 368 (FIII…VLFP).

It belongs to the cytochrome b family. As to quaternary structure, the cytochrome bc1 complex contains 11 subunits: 3 respiratory subunits (MT-CYB, CYC1 and UQCRFS1), 2 core proteins (UQCRC1 and UQCRC2) and 6 low-molecular weight proteins (UQCRH/QCR6, UQCRB/QCR7, UQCRQ/QCR8, UQCR10/QCR9, UQCR11/QCR10 and a cleavage product of UQCRFS1). This cytochrome bc1 complex then forms a dimer. The cofactor is heme b.

The protein localises to the mitochondrion inner membrane. Functionally, component of the ubiquinol-cytochrome c reductase complex (complex III or cytochrome b-c1 complex) that is part of the mitochondrial respiratory chain. The b-c1 complex mediates electron transfer from ubiquinol to cytochrome c. Contributes to the generation of a proton gradient across the mitochondrial membrane that is then used for ATP synthesis. The chain is Cytochrome b (MT-CYB) from Pachyptila turtur (Fairy prion).